Here is a 356-residue protein sequence, read N- to C-terminus: Phenylalanine--tRNA ligase alpha subunit (356 aa).

Glutamate 260 contributes to the Mg(2+) binding site.

This sequence belongs to the class-II aminoacyl-tRNA synthetase family. Phe-tRNA synthetase alpha subunit type 1 subfamily. Tetramer of two alpha and two beta subunits. The cofactor is Mg(2+).

The protein localises to the cytoplasm. It catalyses the reaction tRNA(Phe) + L-phenylalanine + ATP = L-phenylalanyl-tRNA(Phe) + AMP + diphosphate + H(+). This chain is Phenylalanine--tRNA ligase alpha subunit, found in Gluconacetobacter diazotrophicus (strain ATCC 49037 / DSM 5601 / CCUG 37298 / CIP 103539 / LMG 7603 / PAl5).